Here is a 1045-residue protein sequence, read N- to C-terminus: Elongation factor 3 (1045 aa).

HEAT repeat units follow at residues 5–42, 43–85, 86–123, 125–162, 166–203, 205–241, and 242–279; these read DQSL…GNII, EHDI…PSVE, PFVI…AINP, AIKA…AAKE, LRMP…TVDN, DIER…EVTP, and ATLS…LVED. The ADP site is built by isoleucine 42, histidine 44, and serine 83. Threonine 392, histidine 396, and glutamate 397 together coordinate ADP. ABC transporter domains are found at residues 426–641 and 667–993; these read DEGE…YYEL and VKVS…KKED. ADP-binding residues include asparagine 703, glutamate 922, asparagine 925, and histidine 951. The tract at residues 974 to 1045 is disordered; that stretch reads SGHNWVSGQG…AYVSSDDEDF (72 aa). The segment covering 1007 to 1031 has biased composition (basic residues); that stretch reads GGKKKKKLSSAELRKKKKERMKKKK.

Belongs to the ABC transporter superfamily. ABCF family. EF3 subfamily. As to quaternary structure, monomer.

Its subcellular location is the cytoplasm. The protein localises to the cytosol. The catalysed reaction is ATP + H2O = ADP + phosphate + H(+). It participates in protein biosynthesis; polypeptide chain elongation. Its function is as follows. Ribosome-dependent ATPase that functions in cytoplasmic translation elongation. Required for the ATP-dependent release of deacylated tRNA from the ribosomal E-site during protein biosynthesis. Stimulates the eEF1A-dependent binding of aminoacyl-tRNA to the ribosomal A-site, which has reduced affinity for tRNA as long as the E-site is occupied. Assists translation termination by stimulating the release of nascent protein from the ribosome by release factors. The sequence is that of Elongation factor 3 (TEF3) from Candida glabrata (strain ATCC 2001 / BCRC 20586 / JCM 3761 / NBRC 0622 / NRRL Y-65 / CBS 138) (Yeast).